Here is a 251-residue protein sequence, read N- to C-terminus: Probable transcriptional regulatory protein cauri_1421 (251 aa).

Positions 1–21 are disordered; sequence MAGHSKWATTKHKKAANDAKR.

It belongs to the TACO1 family.

It localises to the cytoplasm. In Corynebacterium aurimucosum (strain ATCC 700975 / DSM 44827 / CIP 107346 / CN-1) (Corynebacterium nigricans), this protein is Probable transcriptional regulatory protein cauri_1421.